We begin with the raw amino-acid sequence, 124 residues long: Fluoride-specific ion channel FluC (124 aa).

A run of 4 helical transmembrane segments spans residues 4–24, 36–56, 63–83, and 100–120; these read YLVI…TGVY, GTLI…ILFL, PLWR…LSSI, and LLNI…GIVL. G75 and T78 together coordinate Na(+).

The protein belongs to the fluoride channel Fluc/FEX (TC 1.A.43) family.

It localises to the cell inner membrane. The catalysed reaction is fluoride(in) = fluoride(out). Na(+) is not transported, but it plays an essential structural role and its presence is essential for fluoride channel function. Its function is as follows. Fluoride-specific ion channel. Important for reducing fluoride concentration in the cell, thus reducing its toxicity. This Sulfurihydrogenibium sp. (strain YO3AOP1) protein is Fluoride-specific ion channel FluC.